Here is a 144-residue protein sequence, read N- to C-terminus: uncharacterized protein (144 aa).

The interval 1-24 (MGKVIQFPFGEEPEKKEEKELKTE) is disordered. Over residues 12 to 24 (EPEKKEEKELKTE) the composition is skewed to basic and acidic residues.

This is an uncharacterized protein from Aquifex aeolicus (strain VF5).